The following is an 86-amino-acid chain: Small ribosomal subunit protein bS16 (86 aa).

It belongs to the bacterial ribosomal protein bS16 family.

In Trichormus variabilis (strain ATCC 29413 / PCC 7937) (Anabaena variabilis), this protein is Small ribosomal subunit protein bS16.